The sequence spans 190 residues: (S)-2-hydroxypropylphosphonic acid epoxidase (190 aa).

The HTH cro/C1-type domain occupies 10 to 60 (KAHLEALLATRKMTLEHLQDVRHDATQVYFDGLEHLQNVAQYLAIPLSEFF). A DNA-binding region (H-T-H motif) is located at residues 20 to 40 (RKMTLEHLQDVRHDATQVYFD). Substrate contacts are provided by residues R87, Y95, 125–128 (NGGH), and E132. The Fe cation site is built by H128, E132, and H171. Residues 128–176 (HGSREIVYVTRGAVRVRWVGDNDELKEDVLNEGDSIFILPNVPHSFTNH) form the Cupin type-2 domain.

The protein belongs to the non-heme iron-dependent dioxygenase family. As to quaternary structure, homotrimer. Fe(2+) is required as a cofactor.

The catalysed reaction is (S)-2-hydroxypropylphosphonate + H2O2 = (1R,2S)-epoxypropylphosphonate + 2 H2O. The protein operates within antibiotic biosynthesis; fosfomycin biosynthesis. Its function is as follows. Non-heme-dependent dioxygenase that catalyzes the oxidative epoxidation of (S)-2-hydroxypropylphosphonate into (1R,2S)-epoxypropylphosphonate, the final step in the biosynthesis of fosfomycin antibiotic. The chain is (S)-2-hydroxypropylphosphonic acid epoxidase (hppE) from Pseudomonas syringae.